The sequence spans 689 residues: MRKFFRGASFYILAFIIILFIVQNFGRPTQEIDELDFSEFYRALVNDRVTEAHLVERSVEGIWVNNNNEEMSYRSFVPEVFSEERLTLIIEEKIDQEGLRVSAAPPPTTPWFIELLPSIFMVLIFIVFWFVFMQQSQGGGNRVMSFGKSKAKLHKDDEGKRITFDDVAGLDEEKAEVEELVDFLKNPKKYIELGARIPKGILMIGPPGTGKTYLTKAVAGEAGVPFFSISGSDFVEMFVGVGASRVRDLFEQAKKSAPCIIFIDEIDAVGRKRGAGLGGGHDEREQTLNQLLVEMDGFGINEGIIIVAATNRPDILDPALLRPGRFDRQVMVGAPDIKGREQILQVHAKGKPLDEDVNLKVLARRTPGFTPADIENLMNEAALLTARKNEKKIKMETVEEAITKVIAGLEKKSRVISEKERKLTAYHEAGHAVVAKLLTHTDPVHQVTIIPRGRAGGFTMTLPTEDKYYVTKTEMQEHIVHLLGGRVAEKLVLHDISTGASNDLQRVSSIARAMVTQYGMSDKLGSMTFGDGDSEVFLGRDFTSKHNYSEEVAAEIDQEIRKFVEEAYMLTEKLLTENMDKLHVIAQALLKLETLDADAFEMIFTGEIVIGKDDQLEDIQPKLNVVKAKKRAAEAAEEAEVAKEDAKKQDVKVSLKKQEKEELIEVSSDKEEEKDNQDDQDNEENRKEE.

Residues 1–3 (MRK) lie on the Cytoplasmic side of the membrane. Residues 4 to 24 (FFRGASFYILAFIIILFIVQN) traverse the membrane as a helical segment. Topologically, residues 25–111 (FGRPTQEIDE…SAAPPPTTPW (87 aa)) are extracellular. The chain crosses the membrane as a helical span at residues 112–132 (FIELLPSIFMVLIFIVFWFVF). The Cytoplasmic portion of the chain corresponds to 133–689 (MQQSQGGGNR…QDNEENRKEE (557 aa)). 205 to 212 (GPPGTGKT) provides a ligand contact to ATP. His-427 contacts Zn(2+). The active site involves Glu-428. Zn(2+)-binding residues include His-431 and Asp-503. The span at 661 to 673 (EELIEVSSDKEEE) shows a compositional bias: basic and acidic residues. The segment at 661-689 (EELIEVSSDKEEEKDNQDDQDNEENRKEE) is disordered.

It in the central section; belongs to the AAA ATPase family. In the C-terminal section; belongs to the peptidase M41 family. As to quaternary structure, homohexamer. Zn(2+) is required as a cofactor.

It is found in the cell membrane. Functionally, acts as a processive, ATP-dependent zinc metallopeptidase for both cytoplasmic and membrane proteins. Plays a role in the quality control of integral membrane proteins. The polypeptide is ATP-dependent zinc metalloprotease FtsH 2 (Alkaliphilus metalliredigens (strain QYMF)).